The sequence spans 139 residues: MEFFRPTELREIIPLPFFSYLVPCGFPSPAADYIEQRIDLNELLVSHPSSTYFVKASGDSMIEAGISDGDLLVVDSSRNADHGDIVIAAIEGEFTVKRLQLRPTVQLIPMNGAYRPIPVGSEDTLDIFGVVTFIIKAVS.

Residues Ser60 and Lys97 each act as for autocatalytic cleavage activity in the active site.

This sequence belongs to the peptidase S24 family.

In terms of biological role, involved in UV protection and mutation. Essential for induced (or SOS) mutagenesis. May modify the DNA replication machinery to allow bypass synthesis across a damaged template. The protein is Protein UmuD (umuD) of Salmonella typhimurium (strain LT2 / SGSC1412 / ATCC 700720).